The chain runs to 548 residues: Chaperonin GroEL (548 aa).

Residues 30–33 (TLGP), K51, 87–91 (DGTTT), G415, 479–481 (NAA), and D495 contribute to the ATP site. Positions 525–548 (PKEDKTSDASSSPAGGMGGMGGMM) are disordered. Over residues 539 to 548 (GGMGGMGGMM) the composition is skewed to gly residues.

The protein belongs to the chaperonin (HSP60) family. As to quaternary structure, forms a cylinder of 14 subunits composed of two heptameric rings stacked back-to-back. Interacts with the co-chaperonin GroES.

It is found in the cytoplasm. It catalyses the reaction ATP + H2O + a folded polypeptide = ADP + phosphate + an unfolded polypeptide.. Its function is as follows. Together with its co-chaperonin GroES, plays an essential role in assisting protein folding. The GroEL-GroES system forms a nano-cage that allows encapsulation of the non-native substrate proteins and provides a physical environment optimized to promote and accelerate protein folding. The protein is Chaperonin GroEL of Buchnera aphidicola subsp. Rhopalosiphum padi.